Here is a 519-residue protein sequence, read N- to C-terminus: Serine/threonine-protein kinase RIO3 (519 aa).

Serine 8 and serine 112 each carry phosphoserine. Positions 121–159 (PYEDSDSSEDEVDWQDTRDDPYRPAKPVPTPKKGFIGKG) are disordered. Tyrosine 122 carries the post-translational modification Phosphotyrosine. Residues 124 to 134 (DSDSSEDEVDW) are compositionally biased toward acidic residues. 3 positions are modified to phosphoserine: serine 125, serine 127, and serine 128. The 269-residue stretch at 251–519 (ETITGCISTG…DGDPPLLYDE (269 aa)) folds into the Protein kinase domain. ATP contacts are provided by residues 257–265 (ISTGKESVV) and lysine 290. Aspartate 406 acts as the Proton acceptor in catalysis.

It belongs to the protein kinase superfamily. RIO-type Ser/Thr kinase family. Interacts with CASP10. Interacts with IRF3; RIOK3 probably mediates the interaction of TBK1 with IRF3. Associated with 40S pre-ribosomal particles. It depends on Mg(2+) as a cofactor. In terms of processing, autophosphorylated (in vitro). In terms of tissue distribution, widely expressed.

It localises to the cytoplasm. It carries out the reaction L-seryl-[protein] + ATP = O-phospho-L-seryl-[protein] + ADP + H(+). The enzyme catalyses L-threonyl-[protein] + ATP = O-phospho-L-threonyl-[protein] + ADP + H(+). Its function is as follows. Involved in regulation of type I interferon (IFN)-dependent immune response which plays a critical role in the innate immune response against DNA and RNA viruses. May act as an adapter protein essential for the recruitment of TBK1 to IRF3. Phosphorylates IFIH1 on 'Ser-828' interfering with IFIH1 filament assembly on long dsRNA and resulting in attenuated IFIH1-signaling. Can inhibit CASP10 isoform 7-mediated activation of the NF-kappaB signaling pathway. May play a role in the biogenesis of the 40S ribosomal subunit. Involved in the processing of 21S pre-rRNA to the mature 18S rRNA. The sequence is that of Serine/threonine-protein kinase RIO3 (RIOK3) from Homo sapiens (Human).